A 77-amino-acid chain; its full sequence is Small ribosomal subunit protein bS21 (77 aa).

A compositionally biased stretch (basic and acidic residues) spans 38–52; sequence KPSEKRAREKAEAVR. The interval 38–77 is disordered; sequence KPSEKRAREKAEAVRRTRKLARKRAQREGLISNGRGSPLK. Positions 53 to 62 are enriched in basic residues; the sequence is RTRKLARKRA.

Belongs to the bacterial ribosomal protein bS21 family.

This is Small ribosomal subunit protein bS21 from Bartonella henselae (strain ATCC 49882 / DSM 28221 / CCUG 30454 / Houston 1) (Rochalimaea henselae).